Consider the following 530-residue polypeptide: Cytochrome P450 2U1 (530 aa).

The next 4 membrane-spanning stretches (helical) occupy residues 21–41 (VRATGGALLLCLLAVLLGWVW), 99–119 (VYGNIFSFFIGHRLVVVLSDF), 247–267 (ICLHSQLFLINICPWFYYLPF), and 328–348 (LFYIIGDLFIAGTDTTTNSLL). Heme is bound at residue Cys-476. A helical transmembrane segment spans residues 481–501 (LAKMELFLMFVSLMQTFTFAL).

This sequence belongs to the cytochrome P450 family. Requires heme as cofactor. In terms of tissue distribution, widely expressed. Expressed in heart, brain and liver.

Its subcellular location is the endoplasmic reticulum membrane. It is found in the microsome membrane. The protein localises to the mitochondrion inner membrane. The catalysed reaction is an omega-methyl-long-chain fatty acid + reduced [NADPH--hemoprotein reductase] + O2 = an omega-hydroxy-long-chain fatty acid + oxidized [NADPH--hemoprotein reductase] + H2O + H(+). It catalyses the reaction (5Z,8Z,11Z,14Z)-eicosatetraenoate + reduced [NADPH--hemoprotein reductase] + O2 = 19-hydroxy-(5Z,8Z,11Z,14Z)-eicosatetraenoate + oxidized [NADPH--hemoprotein reductase] + H2O + H(+). It carries out the reaction (5Z,8Z,11Z,14Z)-eicosatetraenoate + reduced [NADPH--hemoprotein reductase] + O2 = 20-hydroxy-(5Z,8Z,11Z,14Z)-eicosatetraenoate + oxidized [NADPH--hemoprotein reductase] + H2O + H(+). The enzyme catalyses N-[(5Z,8Z,11Z,14Z)-eicosatetraenoyl]-serotonin + reduced [NADPH--hemoprotein reductase] + O2 = 2-oxo-N-[(5Z,8Z,11Z,14Z)-eicosatetraenoyl]-serotonin + oxidized [NADPH--hemoprotein reductase] + H2O + H(+). Its function is as follows. A cytochrome P450 monooxygenase involved in the metabolism of arachidonic acid and its conjugates. Mechanistically, uses molecular oxygen inserting one oxygen atom into a substrate, and reducing the second into a water molecule, with two electrons provided by NADPH via cytochrome P450 reductase (CPR; NADPH-ferrihemoprotein reductase). Acts as an omega and omega-1 hydroxylase for arachidonic acid and possibly for other long chain fatty acids. May modulate the arachidonic acid signaling pathway and play a role in other fatty acid signaling processes. May down-regulate the biological activities of N-arachidonoyl-serotonin, an endocannabinoid that has anti-nociceptive effects through inhibition of fatty acid amide hydrolase FAAH, TRPV1 receptor and T-type calcium channels. Catalyzes C-2 oxidation of the indole ring of N-arachidonoyl-serotonin forming a less active product 2-oxo-N-arachidonoyl-serotonin. This chain is Cytochrome P450 2U1, found in Mus musculus (Mouse).